The primary structure comprises 578 residues: L-2,3-diaminopropanoate--citrate ligase (578 aa).

This sequence belongs to the IucA/IucC family. In terms of assembly, forms a mixture of monomer and dimer in solution.

The catalysed reaction is (S)-2,3-diaminopropanoate + citrate + ATP = 2-[(L-alanin-3-ylcarbamoyl)methyl]-2-hydroxybutanedioate + AMP + diphosphate. It functions in the pathway siderophore biosynthesis. In terms of biological role, catalyzes the synthesis of citryl-L-2,3-diaminopropionic acid from L-2,3-diaminopropionic acid (L-Dap) and citrate, the first step in staphyloferrin B biosynthesis. This chain is L-2,3-diaminopropanoate--citrate ligase, found in Staphylococcus aureus (strain NCTC 8325 / PS 47).